We begin with the raw amino-acid sequence, 182 residues long: Peptide deformylase (182 aa).

Fe cation is bound by residues cysteine 100 and histidine 142. Residue glutamate 143 is part of the active site. Histidine 146 provides a ligand contact to Fe cation.

The protein belongs to the polypeptide deformylase family. Fe(2+) serves as cofactor.

It carries out the reaction N-terminal N-formyl-L-methionyl-[peptide] + H2O = N-terminal L-methionyl-[peptide] + formate. In terms of biological role, removes the formyl group from the N-terminal Met of newly synthesized proteins. Requires at least a dipeptide for an efficient rate of reaction. N-terminal L-methionine is a prerequisite for activity but the enzyme has broad specificity at other positions. This is Peptide deformylase from Bartonella bacilliformis (strain ATCC 35685 / KC583 / Herrer 020/F12,63).